An 88-amino-acid chain; its full sequence is uncharacterized protein (88 aa).

This is an uncharacterized protein from Homo sapiens (Human).